Here is a 576-residue protein sequence, read N- to C-terminus: Protein O-linked-mannose beta-1,4-N-acetylglucosaminyltransferase 2 (576 aa).

Over 1-4 (MNIS) the chain is Cytoplasmic. The chain crosses the membrane as a helical; Signal-anchor for type II membrane protein span at residues 5 to 25 (AVFNALLVSIMAAVLWKHVKL). Topologically, residues 26–576 (LEQFYVIEEE…PFAEVLVCNT (551 aa)) are lumenal. Asn98, Asn275, Asn335, Asn451, Asn539, and Asn561 each carry an N-linked (GlcNAc...) asparagine glycan. One can recognise a Fibronectin type-III domain in the interval 482-576 (RESKCQASAQ…PFAEVLVCNT (95 aa)).

It belongs to the glycosyltransferase 61 family.

Its subcellular location is the endoplasmic reticulum membrane. It carries out the reaction 3-O-(alpha-D-mannosyl)-L-threonyl-[protein] + UDP-N-acetyl-alpha-D-glucosamine = 3-O-(N-acetyl-beta-D-glucosaminyl-(1-&gt;4)-alpha-D-mannosyl)-L-threonyl-[protein] + UDP + H(+). It functions in the pathway protein modification; protein glycosylation. Functionally, O-linked mannose beta-1,4-N-acetylglucosaminyltransferase that transfers UDP-N-acetyl-D-glucosamine to the 4-position of the mannose to generate N-acetyl-D-glucosamine-beta-1,4-O-D-mannosylprotein. Involved in the biosynthesis of the phosphorylated O-mannosyl trisaccharide (N-acetylgalactosamine-beta-3-N-acetylglucosamine-beta-4-(phosphate-6-)mannose), a carbohydrate structure present in alpha-dystroglycan (DAG1), which is required for binding laminin G-like domain-containing extracellular proteins with high affinity. The protein is Protein O-linked-mannose beta-1,4-N-acetylglucosaminyltransferase 2 (pomgnt2) of Xenopus tropicalis (Western clawed frog).